Here is a 144-residue protein sequence, read N- to C-terminus: Protection of telomeres protein 1c (144 aa).

Belongs to the telombin family. In terms of tissue distribution, expressed at extremely low levels at the limit of detection.

Its subcellular location is the nucleus. It is found in the chromosome. The protein resides in the telomere. Functionally, binds specifically single-stranded telomeric DNA with weak affinity. Has probably no function in the regulation of telomere length. The sequence is that of Protection of telomeres protein 1c from Arabidopsis thaliana (Mouse-ear cress).